Here is a 357-residue protein sequence, read N- to C-terminus: MPTYNFAAGPATLPRPVLEQVQRELLDYQGSQVSILEISHRSPVFREIYQQAKERLLQLMGLSADEYTPLFLQGGGTLQFTMVPLNLARDHHRVAYADTGHWSARAIEEAKKLPDLTVDVVTEAGPDFAHIPAVPDLPADTYDYLHITTNNTIMGLAYQDLPQTAVLLVGDLSSNFLGQAYDFSSFDLIYAGAQKNLAPAGVTIVVVKNDYLTEDHGLPSMLNYPALAKKESALNTPPVFQIYFANLVLKWLKEQGGVQAMDELNRQKAGLVYDYLDQSKLFSNRVAPDSRSLTNIPFTTGKADLDQRFIKEAAAAGLVNLKGHRLVGGMRASLYNAMPLAGAVALRDFMHQFEQEI.

Residue Arg-41 coordinates L-glutamate. Pyridoxal 5'-phosphate contacts are provided by residues 76–77 (GT), Trp-102, Thr-152, Asp-171, and Gln-194. At Lys-195 the chain carries N6-(pyridoxal phosphate)lysine. 235–236 (NT) is a pyridoxal 5'-phosphate binding site.

The protein belongs to the class-V pyridoxal-phosphate-dependent aminotransferase family. SerC subfamily. In terms of assembly, homodimer. Pyridoxal 5'-phosphate is required as a cofactor.

Its subcellular location is the cytoplasm. It catalyses the reaction O-phospho-L-serine + 2-oxoglutarate = 3-phosphooxypyruvate + L-glutamate. It carries out the reaction 4-(phosphooxy)-L-threonine + 2-oxoglutarate = (R)-3-hydroxy-2-oxo-4-phosphooxybutanoate + L-glutamate. It participates in amino-acid biosynthesis; L-serine biosynthesis; L-serine from 3-phospho-D-glycerate: step 2/3. In terms of biological role, catalyzes the reversible conversion of 3-phosphohydroxypyruvate to phosphoserine and of 3-hydroxy-2-oxo-4-phosphonooxybutanoate to phosphohydroxythreonine. This chain is Phosphoserine aminotransferase, found in Limosilactobacillus fermentum (strain NBRC 3956 / LMG 18251) (Lactobacillus fermentum).